Consider the following 106-residue polypeptide: Cell division protein FtsL (106 aa).

Over 1–22 (MPRQSPPNLAKLIALDLLTVGR) the chain is Cytoplasmic. Residues 23 to 43 (VPLLLLVLIFSCAMGVVFMTH) traverse the membrane as a helical segment. The Periplasmic segment spans residues 44 to 106 (HTRQAISAKD…SDKEVVINLK (63 aa)).

Belongs to the FtsL family. Part of a complex composed of FtsB, FtsL and FtsQ.

Its subcellular location is the cell inner membrane. Its function is as follows. Essential cell division protein. May link together the upstream cell division proteins, which are predominantly cytoplasmic, with the downstream cell division proteins, which are predominantly periplasmic. The polypeptide is Cell division protein FtsL (Vibrio cholerae serotype O1 (strain ATCC 39315 / El Tor Inaba N16961)).